Here is a 101-residue protein sequence, read N- to C-terminus: Replication restart protein PriB (101 aa).

The SSB domain maps to 1-101 (MTTNNLVLSG…IHAENVELKT (101 aa)).

The protein belongs to the PriB family. Homodimer. Interacts with PriA and DnaT. Component of the replication restart primosome. Primosome assembly occurs via a 'hand-off' mechanism. PriA binds to replication forks, subsequently PriB then DnaT bind; DnaT then displaces ssDNA to generate the helicase loading substrate.

Functionally, involved in the restart of stalled replication forks, which reloads the replicative helicase on sites other than the origin of replication; the PriA-PriB pathway is the major replication restart pathway. During primosome assembly it facilitates complex formation between PriA and DnaT on DNA; stabilizes PriA on DNA. Stimulates the DNA unwinding activity of PriA helicase. In Shewanella oneidensis (strain ATCC 700550 / JCM 31522 / CIP 106686 / LMG 19005 / NCIMB 14063 / MR-1), this protein is Replication restart protein PriB.